We begin with the raw amino-acid sequence, 404 residues long: Cysteine desulfurase IscS (404 aa).

Residues 75–76, asparagine 155, glutamine 183, and 203–205 contribute to the pyridoxal 5'-phosphate site; these read AT and SAH. Lysine 206 is subject to N6-(pyridoxal phosphate)lysine. Threonine 243 is a pyridoxal 5'-phosphate binding site. Cysteine 328 serves as the catalytic Cysteine persulfide intermediate. A [2Fe-2S] cluster-binding site is contributed by cysteine 328.

This sequence belongs to the class-V pyridoxal-phosphate-dependent aminotransferase family. NifS/IscS subfamily. As to quaternary structure, homodimer. Forms a heterotetramer with IscU, probably interacts with other sulfur acceptors. Pyridoxal 5'-phosphate is required as a cofactor.

Its subcellular location is the cytoplasm. It catalyses the reaction (sulfur carrier)-H + L-cysteine = (sulfur carrier)-SH + L-alanine. It participates in cofactor biosynthesis; iron-sulfur cluster biosynthesis. Its activity is regulated as follows. Inhibited by equimolar N-iodoacetyl-N'-(5-sulfo-1-naphthyl)ethylenediamine. In terms of biological role, master enzyme that delivers sulfur to a number of partners involved in Fe-S cluster assembly, tRNA modification or cofactor biosynthesis. Catalyzes the removal of elemental sulfur from cysteine to produce alanine via an enzyme-bound persulfide intermediate. Functions as a sulfur delivery protein for Fe-S cluster synthesis. Cluster assembly on IscU homodimers proceeds sequentially from 1 2Fe-2S per dimer, to 2 2Fe-2S per dimer and finally 1 4Fe-4S per dimer. This Azotobacter vinelandii protein is Cysteine desulfurase IscS.